The sequence spans 728 residues: Magnetosome formation protease MamE (728 aa).

Residues 1-21 (MAMFNGDVEDGGRGDASCGKD) are Cytoplasmic-facing. The chain crosses the membrane as a helical span at residues 22–42 (LKRYLMLMGVVALVVLFGAFI). Residues 43–728 (YRQSSGGLRL…RNGQEFWIVL (686 aa)) lie on the Lumenal side of the membrane. Catalysis depends on charge relay system residues His188, Asp221, and Ser297. Positions 375 to 398 (IFAGTRAPHTDGRQNMDCTTCHDL) match the MCR (magnetochrome) 1 motif. 6 residues coordinate heme: Cys392, Cys395, His396, Cys438, Cys441, and His442. The short motif at 421–444 (IPMGAVSPHTDGRQNMNCANCHQM) is the MCR 2 element. 2 consecutive PDZ domains span residues 471–573 (AINI…LRDG) and 622–721 (PAVM…NRNG).

It in the N-terminal section; belongs to the peptidase S1C family. As to quaternary structure, might interact with MamB via PDZ1. Requires heme as cofactor. In terms of processing, subject to autocatalytic cleavage; cleavage also requires MamO.

Its subcellular location is the magnetosome membrane. Autoproteolysis is stimulated by exogenous substrates or peptides that bind to its PDZ domains; may be stimulated by an environmental cue in vivo. Protease activity is tightly regulated; increasing its activity decreases substrate levels and disturbs biomineralization. In terms of biological role, acts at 2 distinct steps of magnetosome formation; required for correct localization of proteins to the magnetosome while the protease activity is required for maturation of small magnetite crystals into larger, functional ones. The 2 functions are separable by mutation. Probably cleaves at least itself, MamO and MamP; cleavage requires the putative transport domain of MamO. Involved in localization of some proteins (at least MamA, MamC, MamF, MamI and MamJ) to the magnetosome. This is Magnetosome formation protease MamE (mamE) from Paramagnetospirillum magneticum (strain ATCC 700264 / AMB-1) (Magnetospirillum magneticum).